Reading from the N-terminus, the 477-residue chain is Tripartite motif-containing protein 72 (477 aa).

Positions 14, 17, 29, 31, 34, 37, 53, 56, 86, 89, 97, 100, 105, 108, 114, and 117 each coordinate Zn(2+). Residues 14–57 (CPLCLQLFDAPVTAECGHSFCRACLSRVAGEPAADGTVNCPCCQ) form an RING-type zinc finger. The B box-type zinc-finger motif lies at 81–122 (VPQGHCEEHLDPLSIYCEQDRVLVCGVCASLGSHRGHRLLPA). Positions 135–232 (QQKLQLQEAS…EKVLEEVADK (98 aa)) form a coiled coil. Ser255 is modified (phosphoserine). The B30.2/SPRY domain occupies 271 to 475 (DFKFQVWRKM…PLLLVGPDGQ (205 aa)).

Belongs to the TRIM/RBCC family. In terms of assembly, homodimer. Homooligomer; disulfide-linked. Oligomerizes on the phospholipid membrane. Interacts with DYSF and CAV3. Disulfide bond formation at Cys-242 occurs in case of membrane damage that cause the entry of the oxidized milieu of the extracellular space, resulting in homooligomerization. Muscle-specific.

The protein localises to the cell membrane. The protein resides in the sarcolemma. It is found in the cytoplasmic vesicle membrane. It catalyses the reaction S-ubiquitinyl-[E2 ubiquitin-conjugating enzyme]-L-cysteine + [acceptor protein]-L-lysine = [E2 ubiquitin-conjugating enzyme]-L-cysteine + N(6)-ubiquitinyl-[acceptor protein]-L-lysine.. It functions in the pathway protein modification; protein ubiquitination. Its activity is regulated as follows. Specifically binds phosphatidylserine. The binding to phospholipids enhances ubiquitination activity. Muscle-specific E3 ubiquitin-protein ligase that plays a central role in cell membrane repair by nucleating the assembly of the repair machinery at injury sites. Its ubiquitination activity is mediated by E2 ubiquitin-conjugating enzymes UBE2D1, UBE2D2 and UBE2D3. Acts as a sensor of oxidation: upon membrane damage, entry of extracellular oxidative environment results in disulfide bond formation and homooligomerization at the injury site. This oligomerization acts as a nucleation site for recruitment of TRIM72-containing vesicles to the injury site, leading to membrane patch formation. Probably acts upstream of the Ca(2+)-dependent membrane resealing process. Required for transport of DYSF to sites of cell injury during repair patch formation. Regulates membrane budding and exocytosis. May be involved in the regulation of the mobility of KCNB1-containing endocytic vesicles. This Oryctolagus cuniculus (Rabbit) protein is Tripartite motif-containing protein 72.